The primary structure comprises 273 residues: 1,4-dihydroxy-2-naphthoyl-CoA synthase (273 aa).

Substrate-binding positions include Arg34, 73-77 (SGGDQ), Tyr85, 117-121 (YAVGG), Thr143, Ser149, Tyr246, and Lys261. Residue 142–144 (QTG) participates in hydrogencarbonate binding. Residues 254-265 (GRDAFKEKRDPD) show a composition bias toward basic and acidic residues. The tract at residues 254–273 (GRDAFKEKRDPDFDQFPKFP) is disordered.

The protein belongs to the enoyl-CoA hydratase/isomerase family. MenB subfamily. Requires hydrogencarbonate as cofactor.

It catalyses the reaction 2-succinylbenzoyl-CoA + H(+) = 1,4-dihydroxy-2-naphthoyl-CoA + H2O. Its pathway is quinol/quinone metabolism; 1,4-dihydroxy-2-naphthoate biosynthesis; 1,4-dihydroxy-2-naphthoate from chorismate: step 6/7. It participates in quinol/quinone metabolism; menaquinone biosynthesis. Its function is as follows. Converts o-succinylbenzoyl-CoA (OSB-CoA) to 1,4-dihydroxy-2-naphthoyl-CoA (DHNA-CoA). This Staphylococcus aureus (strain MRSA252) protein is 1,4-dihydroxy-2-naphthoyl-CoA synthase.